The chain runs to 342 residues: GTPase Obg (342 aa).

The 159-residue stretch at 1–159 (MKFLDEAKVY…MWIWLRLKLI (159 aa)) folds into the Obg domain. Residues 160 to 327 (ADAGLVGLPN…ALRALQTEID (168 aa)) enclose the OBG-type G domain. GTP is bound by residues 166–173 (GLPNAGKS), 191–195 (FTTLH), 212–215 (DIPG), 279–282 (SKAD), and 308–310 (SSA). Ser-173 and Thr-193 together coordinate Mg(2+).

This sequence belongs to the TRAFAC class OBG-HflX-like GTPase superfamily. OBG GTPase family. Monomer. The cofactor is Mg(2+).

The protein localises to the cytoplasm. An essential GTPase which binds GTP, GDP and possibly (p)ppGpp with moderate affinity, with high nucleotide exchange rates and a fairly low GTP hydrolysis rate. Plays a role in control of the cell cycle, stress response, ribosome biogenesis and in those bacteria that undergo differentiation, in morphogenesis control. The protein is GTPase Obg of Methylobacterium radiotolerans (strain ATCC 27329 / DSM 1819 / JCM 2831 / NBRC 15690 / NCIMB 10815 / 0-1).